The following is a 513-amino-acid chain: ATP synthase subunit alpha (513 aa).

169–176 (GDRQTGKS) contributes to the ATP binding site.

Belongs to the ATPase alpha/beta chains family. F-type ATPases have 2 components, CF(1) - the catalytic core - and CF(0) - the membrane proton channel. CF(1) has five subunits: alpha(3), beta(3), gamma(1), delta(1), epsilon(1). CF(0) has three main subunits: a(1), b(2) and c(9-12). The alpha and beta chains form an alternating ring which encloses part of the gamma chain. CF(1) is attached to CF(0) by a central stalk formed by the gamma and epsilon chains, while a peripheral stalk is formed by the delta and b chains.

It localises to the cell inner membrane. It catalyses the reaction ATP + H2O + 4 H(+)(in) = ADP + phosphate + 5 H(+)(out). Functionally, produces ATP from ADP in the presence of a proton gradient across the membrane. The alpha chain is a regulatory subunit. The protein is ATP synthase subunit alpha of Sodalis glossinidius (strain morsitans).